Here is a 363-residue protein sequence, read N- to C-terminus: Pyrimidine monooxygenase RutA (363 aa).

FMN is bound by residues 49–50, Asn115, Glu124, 140–141, and Ser190; these read IK and RY.

The protein belongs to the NtaA/SnaA/DszA monooxygenase family. RutA subfamily.

The enzyme catalyses uracil + FMNH2 + NADH + O2 = (Z)-3-ureidoacrylate + FMN + NAD(+) + H2O + H(+). It carries out the reaction thymine + FMNH2 + NADH + O2 = (Z)-2-methylureidoacrylate + FMN + NAD(+) + H2O + H(+). Functionally, catalyzes the pyrimidine ring opening between N-3 and C-4 by an unusual flavin hydroperoxide-catalyzed mechanism, adding oxygen atoms in the process to yield ureidoacrylate peracid, that immediately reacts with FMN forming ureidoacrylate and FMN-N(5)-oxide. The FMN-N(5)-oxide reacts spontaneously with NADH to produce FMN. Requires the flavin reductase RutF to regenerate FMN in vivo. In Escherichia coli O157:H7 (strain EC4115 / EHEC), this protein is Pyrimidine monooxygenase RutA.